The primary structure comprises 398 residues: Lipase member N (398 aa).

A signal peptide spans 1–18 (MMWLLLTTTCLICGTLNA). One can recognise an AB hydrolase-1 domain in the interval 79–379 (PVVYMQHALF…DWNHFDFVWG (301 aa)). The active-site Nucleophile is Ser-173. A disulfide bridge connects residues Cys-247 and Cys-256. The N-linked (GlcNAc...) asparagine glycan is linked to Asn-272. Active-site charge relay system residues include Asp-344 and His-373.

It belongs to the AB hydrolase superfamily. Lipase family. Highly expressed in the epidermis in the granular keratinocytes. Also detected in other tissues, although at much lower levels, including lung and spleen.

It is found in the secreted. It carries out the reaction a sterol ester + H2O = a sterol + a fatty acid + H(+). The enzyme catalyses a triacylglycerol + H2O = a 1,2-diacylglycerol + a fatty acid + H(+). It catalyses the reaction a triacylglycerol + H2O = a diacylglycerol + a fatty acid + H(+). The catalysed reaction is a cholesterol ester + H2O = cholesterol + a fatty acid + H(+). Its function is as follows. Plays a highly specific role in the last step of keratinocyte differentiation. Contains two distinct domains: the alpha/beta hydrolase fold and the abhydrolase-associated lipase region, also features the consensus sequence of the active site of a genuine lipase. May have an essential function in lipid metabolism of the most differentiated epidermal layers. The polypeptide is Lipase member N (LIPN) (Homo sapiens (Human)).